The sequence spans 186 residues: Peptidyl-tRNA hydrolase (186 aa).

Tyr14 contributes to the tRNA binding site. His19 acts as the Proton acceptor in catalysis. Residues Tyr64, Asn66, and Asn112 each contribute to the tRNA site.

This sequence belongs to the PTH family. As to quaternary structure, monomer.

Its subcellular location is the cytoplasm. The enzyme catalyses an N-acyl-L-alpha-aminoacyl-tRNA + H2O = an N-acyl-L-amino acid + a tRNA + H(+). Functionally, hydrolyzes ribosome-free peptidyl-tRNAs (with 1 or more amino acids incorporated), which drop off the ribosome during protein synthesis, or as a result of ribosome stalling. In terms of biological role, catalyzes the release of premature peptidyl moieties from peptidyl-tRNA molecules trapped in stalled 50S ribosomal subunits, and thus maintains levels of free tRNAs and 50S ribosomes. The chain is Peptidyl-tRNA hydrolase from Bacillus cytotoxicus (strain DSM 22905 / CIP 110041 / 391-98 / NVH 391-98).